We begin with the raw amino-acid sequence, 257 residues long: UPF0246 protein Shal_1126 (257 aa).

This sequence belongs to the UPF0246 family.

The sequence is that of UPF0246 protein Shal_1126 from Shewanella halifaxensis (strain HAW-EB4).